The sequence spans 966 residues: Receptor protein-tyrosine kinase CEPR1 (966 aa).

A signal peptide spans 1–22 (MRLKNFPFFVLFFFFCFNSNQS). The Extracellular portion of the chain corresponds to 23-592 (WGLMSSNQQP…QEPHGKKKLS (570 aa)). Asn-61 carries N-linked (GlcNAc...) asparagine glycosylation. 20 LRR repeats span residues 70–94 (QGLVTDLDLSGLSLSGIFPDGVCSY), 95–120 (FPNLRVLRLSHNHLNKSSSFLNTIPN), 122–144 (SLLRDLNMSSVYLKGTLPDFSQM), 145–168 (KSLRVIDMSWNHFTGSFPLSIFNL), 170–194 (DLEYLNFNENPELDLWTLPDSVSKL), 195–218 (TKLTHMLLMTCMLHGNIPRSIGNL), 219–242 (TSLVDLELSGNFLSGEIPKEIGNL), 245–267 (LRQLELYYNYHLTGSIPEEIGNL), 268–291 (KNLTDIDISVSRLTGSIPDSICSL), 292–315 (PNLRVLQLYNNSLTGEIPKSLGNS), 317–339 (TLKILSLYDNYLTGELPPNLGSS), 341–363 (PMIALDVSENRLSGPLPAHVCKS), 365–386 (KLLYFLVLQNRFTGSIPETYGS), 387–411 (CKTLIRFRVASNRLVGTIPQGVMSL), 412–435 (PHVSIIDLAYNSLSGPIPNAIGNA), 437–459 (NLSELFMQSNRISGVIPHELSHS), 460–483 (TNLVKLDLSNNQLSGPIPSEVGRL), 484–507 (RKLNLLVLQGNHLDSSIPDSLSNL), 508–531 (KSLNVLDLSSNLLTGRIPENLSEL), and 533–554 (PTSINFSSNRLSGPIPVSLIRG). Residues Asn-109, Asn-120, Asn-128, and Asn-167 are each glycosylated (N-linked (GlcNAc...) asparagine). N-linked (GlcNAc...) asparagine glycosylation is found at Asn-217 and Asn-241. Asn-269 and Asn-301 each carry an N-linked (GlcNAc...) asparagine glycan. Residue Asn-437 is glycosylated (N-linked (GlcNAc...) asparagine). Asn-527 and Asn-537 each carry an N-linked (GlcNAc...) asparagine glycan. Residues 593-613 (SIWAILVSVFILVLGVIMFYL) form a helical membrane-spanning segment. The Cytoplasmic segment spans residues 614–966 (RQRMSKNRAV…VSDHLTQTRL (353 aa)). The 279-residue stretch at 656 to 934 (LVDKNIVGHG…TMNEVVQLLI (279 aa)) folds into the Protein kinase domain. Residues 662-670 (VGHGGSGTV) and Lys-684 contribute to the ATP site. Tyr-738 and Tyr-775 each carry phosphotyrosine. Residue Asp-788 is the Proton acceptor of the active site. Tyr-831 and Tyr-838 each carry phosphotyrosine. The disordered stretch occupies residues 937 to 966 (TPQGGPDMTSKPTTKIKDSIVSDHLTQTRL).

It belongs to the protein kinase superfamily. Ser/Thr protein kinase family. As to quaternary structure, interacts with the root-derived peptides CEP1, CEP3 and CEP5. As to expression, expressed in the vasculature, especially in phloem and procambium regions, of stems, leaves, cotyledons, sepals, pedals, pedicels, hypocotyls and roots (in primary and lateral roots, but not in root tips). Expressed in the root from the basal meristem onward. Present in the phloem pole pericycle and in the adjacent phloem.

It is found in the cell membrane. It catalyses the reaction L-tyrosyl-[protein] + ATP = O-phospho-L-tyrosyl-[protein] + ADP + H(+). Receptor kinase involved in the perception of C-terminally encoded plant signaling peptide (CEP) and subsequent regulation of root and shoot development. Required for xylem and phloem cell files morphology and organization, probably by preventing ectopic lignification in phloem cells. Together with CEPR2, mediates systemic nitrogen (N)-demand signaling upon the perception of root-derived peptides (e.g. CEP1) via the up-regulation of genes involved in N uptake and assimilation pathways. Positively regulates lateral root initiation and development; probably repressed by the signaling peptide CEP5. The polypeptide is Receptor protein-tyrosine kinase CEPR1 (Arabidopsis thaliana (Mouse-ear cress)).